The following is a 233-amino-acid chain: Upstream activation factor subunit spp27 (233 aa).

A DEK-C domain is found at 1-53 (MEEYETDIKQILGTVDRQTVSAKQVRQLLEERRKVDLSAHKKDLNALILKCFD). Disordered regions lie at residues 55–122 (TAAP…KPMK) and 194–233 (IPDD…ESTA). The SWIB/MDM2 domain occupies 116 to 193 (PLNKPMKLSP…NKYLTNLMTK (78 aa)). A compositionally biased stretch (basic and acidic residues) spans 194–208 (IPDDQLPKPQPKNEE).

In terms of assembly, component of the UAF (upstream activation factor) complex which consists of spp27/uaf30, rrn5, rrn10, and histones H3 and H4. Interacts with rrn10.

The protein localises to the cytoplasm. It is found in the nucleus. Its function is as follows. Component of the UAF (upstream activation factor) complex which interacts with the upstream element of the RNA polymerase I promoter and forms a stable preinitiation complex. UAF seems to stimulate basal transcription to a fully activated level. The sequence is that of Upstream activation factor subunit spp27 (spp27) from Schizosaccharomyces pombe (strain 972 / ATCC 24843) (Fission yeast).